Reading from the N-terminus, the 207-residue chain is Small ribosomal subunit protein eS1 (207 aa).

It belongs to the eukaryotic ribosomal protein eS1 family.

The protein is Small ribosomal subunit protein eS1 of Methanosarcina barkeri (strain Fusaro / DSM 804).